The sequence spans 269 residues: [LysW]-aminoadipate kinase (269 aa).

Residue 5 to 8 (KVGG) participates in ATP binding. Arg-64 serves as a coordination point for substrate. Tyr-78 serves as a coordination point for ATP. Asn-168 is a binding site for substrate.

The protein belongs to the acetylglutamate kinase family. LysZ subfamily.

Its subcellular location is the cytoplasm. It catalyses the reaction [amino-group carrier protein]-C-terminal-N-(1,4-dicarboxybutan-1-yl)-L-glutamine + ATP = [amino-group carrier protein]-C-terminal-N-(1-carboxy-5-phosphooxy-5-oxopentan-1-yl)-L-glutamine + ADP. It participates in amino-acid biosynthesis; L-lysine biosynthesis via AAA pathway; L-lysine from L-alpha-aminoadipate (Thermus route): step 2/5. In terms of biological role, catalyzes the phosphorylation of LysW-gamma-alpha-aminoadipate. Does not phosphorylate N-acetyl-glutamate. This chain is [LysW]-aminoadipate kinase, found in Thermus thermophilus (strain ATCC BAA-163 / DSM 7039 / HB27).